We begin with the raw amino-acid sequence, 254 residues long: tRNA (guanine-N(1)-)-methyltransferase (254 aa).

Residues Gly119 and 139-144 contribute to the S-adenosyl-L-methionine site; that span reads IGDFVL.

It belongs to the RNA methyltransferase TrmD family. As to quaternary structure, homodimer.

Its subcellular location is the cytoplasm. The enzyme catalyses guanosine(37) in tRNA + S-adenosyl-L-methionine = N(1)-methylguanosine(37) in tRNA + S-adenosyl-L-homocysteine + H(+). Specifically methylates guanosine-37 in various tRNAs. The sequence is that of tRNA (guanine-N(1)-)-methyltransferase from Dechloromonas aromatica (strain RCB).